A 255-amino-acid polypeptide reads, in one-letter code: tRNA (guanine-N(1)-)-methyltransferase (255 aa).

S-adenosyl-L-methionine contacts are provided by residues Gly-117 and 137 to 142 (LGDFVL).

This sequence belongs to the RNA methyltransferase TrmD family. Homodimer.

The protein localises to the cytoplasm. It catalyses the reaction guanosine(37) in tRNA + S-adenosyl-L-methionine = N(1)-methylguanosine(37) in tRNA + S-adenosyl-L-homocysteine + H(+). In terms of biological role, specifically methylates guanosine-37 in various tRNAs. The protein is tRNA (guanine-N(1)-)-methyltransferase of Paraburkholderia xenovorans (strain LB400).